Reading from the N-terminus, the 150-residue chain is Arginine repressor (150 aa).

This sequence belongs to the ArgR family.

It is found in the cytoplasm. Its pathway is amino-acid biosynthesis; L-arginine biosynthesis [regulation]. Functionally, regulates arginine biosynthesis genes. The sequence is that of Arginine repressor from Clostridium botulinum (strain Loch Maree / Type A3).